The sequence spans 237 residues: 1-(5-phosphoribosyl)-5-[(5-phosphoribosylamino)methylideneamino] imidazole-4-carboxamide isomerase (237 aa).

Catalysis depends on D8, which acts as the Proton acceptor. Residue D130 is the Proton donor of the active site.

It belongs to the HisA/HisF family.

It is found in the cytoplasm. It carries out the reaction 1-(5-phospho-beta-D-ribosyl)-5-[(5-phospho-beta-D-ribosylamino)methylideneamino]imidazole-4-carboxamide = 5-[(5-phospho-1-deoxy-D-ribulos-1-ylimino)methylamino]-1-(5-phospho-beta-D-ribosyl)imidazole-4-carboxamide. The protein operates within amino-acid biosynthesis; L-histidine biosynthesis; L-histidine from 5-phospho-alpha-D-ribose 1-diphosphate: step 4/9. The chain is 1-(5-phosphoribosyl)-5-[(5-phosphoribosylamino)methylideneamino] imidazole-4-carboxamide isomerase from Caldicellulosiruptor bescii (strain ATCC BAA-1888 / DSM 6725 / KCTC 15123 / Z-1320) (Anaerocellum thermophilum).